We begin with the raw amino-acid sequence, 207 residues long: MADLSPVLQPHREGGSRYGYTMFPGLECESEAELSLSLARTKTRSYGSTASVAAPLSERYIEHRLSPSDTLQGIALKYGVTMEQIKRANKLFSTDCIFLRKSLNIPVISKKGSLFNGLGSLDSPENETQDNCNSPTKEPALAEAHTVSIPSSAKTNQPIVRSDEELSAKDFLQRLDLQIKRSTQAAQRLKEEDLRHDDSYATCSYQH.

Positions 61-105 constitute a LysM domain; it reads IEHRLSPSDTLQGIALKYGVTMEQIKRANKLFSTDCIFLRKSLNI. The tract at residues 186 to 207 is disordered; sequence AQRLKEEDLRHDDSYATCSYQH. Positions 188-199 are enriched in basic and acidic residues; the sequence is RLKEEDLRHDDS.

This is LysM and putative peptidoglycan-binding domain-containing protein 2 (lysmd2) from Xenopus tropicalis (Western clawed frog).